Here is a 177-residue protein sequence, read N- to C-terminus: Dihydrofolate reductase type 9 (177 aa).

Residues 3–167 form the DHFR domain; it reads SLNMIVAVNK…TKLIFQIWIN (165 aa).

It belongs to the dihydrofolate reductase family. As to quaternary structure, homodimer.

The catalysed reaction is (6S)-5,6,7,8-tetrahydrofolate + NADP(+) = 7,8-dihydrofolate + NADPH + H(+). The protein operates within cofactor biosynthesis; tetrahydrofolate biosynthesis; 5,6,7,8-tetrahydrofolate from 7,8-dihydrofolate: step 1/1. Key enzyme in folate metabolism. Catalyzes an essential reaction for de novo glycine and purine synthesis, and for DNA precursor synthesis. This is Dihydrofolate reductase type 9 (dhfrIX) from Escherichia coli.